We begin with the raw amino-acid sequence, 100 residues long: Urease subunit gamma (100 aa).

This sequence belongs to the urease gamma subunit family. As to quaternary structure, heterotrimer of UreA (gamma), UreB (beta) and UreC (alpha) subunits. Three heterotrimers associate to form the active enzyme.

Its subcellular location is the cytoplasm. It catalyses the reaction urea + 2 H2O + H(+) = hydrogencarbonate + 2 NH4(+). It functions in the pathway nitrogen metabolism; urea degradation; CO(2) and NH(3) from urea (urease route): step 1/1. The sequence is that of Urease subunit gamma from Yersinia aldovae.